The sequence spans 234 residues: Probable flavin reductase (234 aa).

Pyridine is bound at residue 112 to 116 (GGTGL).

Belongs to the Fre/LuxG FAD/NAD(P) flavoprotein oxidoreductase family.

Its function is as follows. Probable flavin reductase in the luminescent systems of different marine bacteria. The chain is Probable flavin reductase (luxG) from Photobacterium leiognathi.